Here is a 507-residue protein sequence, read N- to C-terminus: Blue light receptor lreB (507 aa).

Residues 170 to 234 enclose the PAS domain; it reads RVLNEMKDML…EEMNECITTT (65 aa). Residues 463–488 form a GATA-type zinc finger; that stretch reads CTDCGTSDSPEWRKGPEGPKTLCNAC.

In terms of biological role, probable transcription factor involved in light regulation. Plays crucial roles in fungal growth and asexual development. Involved in conidiophore formation, sclerotium production, and conidial stress tolerance. Positively regulates the fungal pathogenicity towards maize and aflatoxin B1 production. In Aspergillus flavus, this protein is Blue light receptor lreB.